Consider the following 1558-residue polypeptide: Calmodulin-regulated spectrin-associated protein 1-B (1558 aa).

The Calponin-homology (CH) domain maps to 231–346 (WYWKLVPVRY…FIAELFWWFE (116 aa)). 3 stretches are compositionally biased toward polar residues: residues 400–417 (VQNS…SGFS), 440–450 (ACRNRSNSLTQ), and 504–516 (ASTV…SHPG). Disordered stretches follow at residues 400–464 (VQNS…SDKR), 504–523 (ASTV…VRRI), 551–585 (NDIT…SDSR), 602–675 (AKEK…APGQ), 737–790 (TKEL…VASG), 803–850 (QRFG…QNKD), and 943–968 (DRSK…SSSP). Residues 602 to 620 (AKEKSISLNKEEESGEGRQ) show a composition bias toward basic and acidic residues. Residues 643 to 658 (QTLNRTFTPNTSSEFE) are compositionally biased toward polar residues. The segment covering 737–772 (TKELHPDKKQHFEEEVESAKLREDMNVKEHEDKDGG) has biased composition (basic and acidic residues). Composition is skewed to low complexity over residues 776–790 (SSPG…VASG) and 812–822 (RSSTSSSQRTT). Residues 849-887 (KDNANMLASELVQLHMQLEEKRRAIESQKKKMEILTARQ) are a coiled coil. Over residues 943 to 955 (DRSKEAEEPEKAS) the composition is skewed to basic and acidic residues. Residues 971-1004 (VEEEVDLNECNRSIELLNEAIGSIQQQMMQLSLQ) are a coiled coil. Disordered regions lie at residues 1041 to 1131 (FVEP…TFHL), 1257 to 1293 (LRKQ…RREL), 1305 to 1344 (ELCE…KCPA), and 1360 to 1414 (LASV…ITST). Low complexity predominate over residues 1080 to 1090 (SSTPTPTDSPS). Over residues 1106-1115 (DFVQSSVRSE) the composition is skewed to polar residues. The stretch at 1243-1303 (AFLLKQQRKA…IKQEYLRKKQ (61 aa)) forms a coiled coil. Residues 1317–1328 (PKTKPKKQRLKS) show a composition bias toward basic residues. The 135-residue stretch at 1421–1555 (GPKLFKEPSA…QAKRPAGPKK (135 aa)) folds into the CKK domain.

It belongs to the CAMSAP1 family.

The protein resides in the cytoplasm. Its subcellular location is the cytoskeleton. In terms of biological role, key microtubule-organizing protein that specifically binds the minus-end of non-centrosomal microtubules and regulates their dynamics and organization. Specifically recognizes growing microtubule minus-ends and stabilizes microtubules. Acts on free microtubule minus-ends that are not capped by microtubule-nucleating proteins or other factors and protects microtubule minus-ends from depolymerization. In contrast to camsap2 and camsap3, tracks along the growing tips of minus-end microtubules without significantly affecting the polymerization rate: binds at the very tip of the microtubules minus-end and acts as a minus-end tracking protein (-TIP) that dissociates from microtubules after allowing tubulin incorporation. Through interaction with spectrin may regulate neurite outgrowth. This Danio rerio (Zebrafish) protein is Calmodulin-regulated spectrin-associated protein 1-B (camsap1b).